The sequence spans 172 residues: Translation initiation factor IF-3 (172 aa).

This sequence belongs to the IF-3 family. In terms of assembly, monomer.

It is found in the cytoplasm. Its function is as follows. IF-3 binds to the 30S ribosomal subunit and shifts the equilibrium between 70S ribosomes and their 50S and 30S subunits in favor of the free subunits, thus enhancing the availability of 30S subunits on which protein synthesis initiation begins. This chain is Translation initiation factor IF-3, found in Bartonella quintana (strain Toulouse) (Rochalimaea quintana).